We begin with the raw amino-acid sequence, 165 residues long: Biosynthetic peptidoglycan transglycosylase (165 aa).

The protein belongs to the glycosyltransferase 51 family.

It is found in the cell inner membrane. The catalysed reaction is [GlcNAc-(1-&gt;4)-Mur2Ac(oyl-L-Ala-gamma-D-Glu-L-Lys-D-Ala-D-Ala)](n)-di-trans,octa-cis-undecaprenyl diphosphate + beta-D-GlcNAc-(1-&gt;4)-Mur2Ac(oyl-L-Ala-gamma-D-Glu-L-Lys-D-Ala-D-Ala)-di-trans,octa-cis-undecaprenyl diphosphate = [GlcNAc-(1-&gt;4)-Mur2Ac(oyl-L-Ala-gamma-D-Glu-L-Lys-D-Ala-D-Ala)](n+1)-di-trans,octa-cis-undecaprenyl diphosphate + di-trans,octa-cis-undecaprenyl diphosphate + H(+). It functions in the pathway cell wall biogenesis; peptidoglycan biosynthesis. In terms of biological role, peptidoglycan polymerase that catalyzes glycan chain elongation from lipid-linked precursors. The sequence is that of Biosynthetic peptidoglycan transglycosylase from Neisseria meningitidis.